The chain runs to 25 residues: Grammistin Pp 3 (25 aa).

Belongs to the grammistin family. Group 3 subfamily. In terms of assembly, exists as aggregates of 3-4 molecules. As to expression, expressed by the skin glands.

The protein resides in the secreted. Its function is as follows. Thanks to its abundant amphiphilic alpha-helices, it may integrate into membrane phospholipids, leading to lysis of the membrane. Has hemolytic activity. Has antibacterial activity with a broad spectrum against various species of bacteria including both Gram-positive and Gram-negative groups. Also has ichthyotoxic activity. In Pogonoperca punctata (Clown grouper), this protein is Grammistin Pp 3.